A 383-amino-acid polypeptide reads, in one-letter code: Acetylornithine deacetylase (383 aa).

H80 serves as a coordination point for Zn(2+). D82 is an active-site residue. D112 provides a ligand contact to Zn(2+). E144 is a catalytic residue. 3 residues coordinate Zn(2+): E145, E169, and H355.

This sequence belongs to the peptidase M20A family. ArgE subfamily. As to quaternary structure, homodimer. Zn(2+) is required as a cofactor. Requires Co(2+) as cofactor. The cofactor is glutathione.

It is found in the cytoplasm. It carries out the reaction N(2)-acetyl-L-ornithine + H2O = L-ornithine + acetate. Its pathway is amino-acid biosynthesis; L-arginine biosynthesis; L-ornithine from N(2)-acetyl-L-ornithine (linear): step 1/1. Functionally, catalyzes the hydrolysis of the amide bond of N(2)-acetylated L-amino acids. Cleaves the acetyl group from N-acetyl-L-ornithine to form L-ornithine, an intermediate in L-arginine biosynthesis pathway, and a branchpoint in the synthesis of polyamines. In Pectobacterium atrosepticum (strain SCRI 1043 / ATCC BAA-672) (Erwinia carotovora subsp. atroseptica), this protein is Acetylornithine deacetylase.